Consider the following 129-residue polypeptide: Small ribosomal subunit protein uS11 (129 aa).

This sequence belongs to the universal ribosomal protein uS11 family. As to quaternary structure, part of the 30S ribosomal subunit. Interacts with proteins S7 and S18. Binds to IF-3.

In terms of biological role, located on the platform of the 30S subunit, it bridges several disparate RNA helices of the 16S rRNA. Forms part of the Shine-Dalgarno cleft in the 70S ribosome. The chain is Small ribosomal subunit protein uS11 from Methylobacterium nodulans (strain LMG 21967 / CNCM I-2342 / ORS 2060).